The chain runs to 592 residues: Aspartate--tRNA(Asp/Asn) ligase (592 aa).

L-aspartate is bound at residue glutamate 175. The interval 199–202 (QLFK) is aspartate. Arginine 221 serves as a coordination point for L-aspartate. ATP contacts are provided by residues 221 to 223 (RDE) and glutamine 230. An L-aspartate-binding site is contributed by histidine 450. Glutamate 483 serves as a coordination point for ATP. Arginine 490 is an L-aspartate binding site. ATP is bound at residue 535–538 (GLDR).

The protein belongs to the class-II aminoacyl-tRNA synthetase family. Type 1 subfamily. In terms of assembly, homodimer.

The protein localises to the cytoplasm. The enzyme catalyses tRNA(Asx) + L-aspartate + ATP = L-aspartyl-tRNA(Asx) + AMP + diphosphate. Its function is as follows. Aspartyl-tRNA synthetase with relaxed tRNA specificity since it is able to aspartylate not only its cognate tRNA(Asp) but also tRNA(Asn). Reaction proceeds in two steps: L-aspartate is first activated by ATP to form Asp-AMP and then transferred to the acceptor end of tRNA(Asp/Asn). The sequence is that of Aspartate--tRNA(Asp/Asn) ligase from Acinetobacter baumannii (strain AB307-0294).